Reading from the N-terminus, the 570-residue chain is Apyrase (570 aa).

The first 23 residues, 1–23 (MALVRFATIITVLCHLAIQDGAA), serve as a signal peptide directing secretion. 3 residues coordinate a divalent metal cation: Asp-43, His-45, and Asp-94. A glycan (N-linked (GlcNAc...) asparagine) is linked at Asn-108. A divalent metal cation is bound by residues Asn-126, His-229, and His-253. 2 N-linked (GlcNAc...) asparagine glycosylation sites follow: Asn-287 and Asn-326. An AMP-binding site is contributed by Arg-367. N-linked (GlcNAc...) asparagine glycosylation is present at Asn-387. AMP-binding residues include Arg-402 and Asp-507. 2 N-linked (GlcNAc...) asparagine glycosylation sites follow: Asn-552 and Asn-555.

Belongs to the 5'-nucleotidase family. In terms of assembly, interacts with human PLAT; the interaction results in PLAT activation probably via an allosteric activation mechanism. A divalent metal cation is required as a cofactor. In terms of tissue distribution, saliva (at protein level). Salivary gland (at protein level). Not detected in midgut.

The protein localises to the secreted. It catalyses the reaction a ribonucleoside 5'-triphosphate + 2 H2O = a ribonucleoside 5'-phosphate + 2 phosphate + 2 H(+). Cleaves adenosine triphosphate (ATP) and adenosine diphosphate (ADP) to adenosine monophosphate (AMP) and inorganic phosphate. Enhances fibrin degradation in the midgut blood bolus. Activates human tissue plasminogen activator (PLAT), probably via an allosteric activation mechanism. Inhibits ADP-mediated host platelet aggregation in vitro and in mosquito midgut. Inhibits host neutrophil activation in the mosquito midgut: reduces neutrophil extracellular traps formation in the presence of platelets and the formation of total cell- and mitochondrial-derived reactive oxygen species. In terms of biological role, (Microbial infection) Promotes Plasmodium berghei parasite transmission from the mammalian host to the mosquito probably by reducing the blood bolus viscosity. Facilitates sporozoite transmission from the mosquito to the mammalian host during blood feeding. In Anopheles gambiae (African malaria mosquito), this protein is Apyrase.